The sequence spans 150 residues: Ribonuclease H (150 aa).

Residues 7–148 enclose the RNase H type-1 domain; sequence ERPRVEIWTD…VDQLATRGRE (142 aa). Residues D16, E54, D76, and D140 each coordinate Mg(2+).

Belongs to the RNase H family. In terms of assembly, monomer. Mg(2+) is required as a cofactor.

Its subcellular location is the cytoplasm. It catalyses the reaction Endonucleolytic cleavage to 5'-phosphomonoester.. Functionally, endonuclease that specifically degrades the RNA of RNA-DNA hybrids. The sequence is that of Ribonuclease H from Gluconobacter oxydans (strain 621H) (Gluconobacter suboxydans).